The following is a 170-amino-acid chain: Lipoprotein signal peptidase (170 aa).

Transmembrane regions (helical) follow at residues 12–32 (WYWIVVLVFIADQLSKQWVLS), 67–87 (WQRWLFTFVAVGFSILLSVWL), and 94–113 (MWRLNLAYTLVIGGALGNLI). Catalysis depends on residues Asp123 and Asp141. A helical membrane pass occupies residues 133 to 153 (HFPAFNIADSAICIGAGLIIL).

It belongs to the peptidase A8 family.

It localises to the cell inner membrane. The catalysed reaction is Release of signal peptides from bacterial membrane prolipoproteins. Hydrolyzes -Xaa-Yaa-Zaa-|-(S,diacylglyceryl)Cys-, in which Xaa is hydrophobic (preferably Leu), and Yaa (Ala or Ser) and Zaa (Gly or Ala) have small, neutral side chains.. It functions in the pathway protein modification; lipoprotein biosynthesis (signal peptide cleavage). In terms of biological role, this protein specifically catalyzes the removal of signal peptides from prolipoproteins. This is Lipoprotein signal peptidase from Shewanella piezotolerans (strain WP3 / JCM 13877).